Here is a 275-residue protein sequence, read N- to C-terminus: MKKWIAGLLALIAISPVMAATPWQQITHPVAGSPQAIGGFANGCVIGAMPLPLESADYQVMRPDQRRYFGHPDLLNFIHRLSDKAQKNQLGTVLIGDMAMPAGGRFSSGHASHQSGLDVDIWLQLPKQRWSQQQLLKPQPIDLVAADGKRVVPALWQPQVENLIKLAANDNEVTRIFVNPAIKKQLCLDAGADRTWLHKVRPWFGHRAHMHVRLRCPADSLECLDQDTPPPGDGCGAELESWFQPHQPSAKPGKTLPPPLPPSCQALLDNHFAAE.

An N-terminal signal peptide occupies residues 1–19 (MKKWIAGLLALIAISPVMA). 3 cysteine pairs are disulfide-bonded: Cys-44-Cys-264, Cys-187-Cys-235, and Cys-216-Cys-223. The Zn(2+) site is built by His-110, His-113, Asp-120, Asp-147, and His-211. Residues 234–262 (GCGAELESWFQPHQPSAKPGKTLPPPLPP) are disordered.

The protein belongs to the peptidase M74 family. As to quaternary structure, dimer. It depends on Zn(2+) as a cofactor.

It is found in the periplasm. Functionally, murein endopeptidase that cleaves the D-alanyl-meso-2,6-diamino-pimelyl amide bond that connects peptidoglycan strands. Likely plays a role in the removal of murein from the sacculus. In Yersinia enterocolitica serotype O:8 / biotype 1B (strain NCTC 13174 / 8081), this protein is Penicillin-insensitive murein endopeptidase.